We begin with the raw amino-acid sequence, 179 residues long: Large ribosomal subunit protein uL5 (179 aa).

Belongs to the universal ribosomal protein uL5 family. Part of the 50S ribosomal subunit; part of the 5S rRNA/L5/L18/L25 subcomplex. Contacts the 5S rRNA and the P site tRNA. Forms a bridge to the 30S subunit in the 70S ribosome.

This is one of the proteins that bind and probably mediate the attachment of the 5S RNA into the large ribosomal subunit, where it forms part of the central protuberance. In the 70S ribosome it contacts protein S13 of the 30S subunit (bridge B1b), connecting the 2 subunits; this bridge is implicated in subunit movement. Contacts the P site tRNA; the 5S rRNA and some of its associated proteins might help stabilize positioning of ribosome-bound tRNAs. The sequence is that of Large ribosomal subunit protein uL5 from Neisseria meningitidis serogroup A / serotype 4A (strain DSM 15465 / Z2491).